Reading from the N-terminus, the 509-residue chain is Maturase K (509 aa).

It belongs to the intron maturase 2 family. MatK subfamily.

Its subcellular location is the plastid. It is found in the chloroplast. In terms of biological role, usually encoded in the trnK tRNA gene intron. Probably assists in splicing its own and other chloroplast group II introns. This Cicer arietinum (Chickpea) protein is Maturase K.